The primary structure comprises 453 residues: uncharacterized protein (453 aa).

This is an uncharacterized protein from Magallana gigas (Pacific oyster).